A 302-amino-acid polypeptide reads, in one-letter code: Haloalkane dehalogenase (302 aa).

Residues 48–152 (PILLMHGEPS…VVVSNTGLPI (105 aa)) form the AB hydrolase-1 domain. Catalysis depends on Asp-123, which acts as the Nucleophile. Residue Asp-249 is the Proton donor of the active site. The Proton acceptor role is filled by His-278.

Belongs to the haloalkane dehalogenase family. Type 1 subfamily. Monomer.

It catalyses the reaction 1-haloalkane + H2O = a halide anion + a primary alcohol + H(+). Catalyzes hydrolytic cleavage of carbon-halogen bonds in halogenated aliphatic compounds, leading to the formation of the corresponding primary alcohols, halide ions and protons. The polypeptide is Haloalkane dehalogenase (Caulobacter vibrioides (strain ATCC 19089 / CIP 103742 / CB 15) (Caulobacter crescentus)).